The following is a 597-amino-acid chain: uncharacterized protein (597 aa).

In terms of domain architecture, VWFA spans 378–575 (EVSFVVDNSG…YLPRELLRTL (198 aa)).

This is an uncharacterized protein from Treponema pallidum (strain Nichols).